Consider the following 422-residue polypeptide: Serine--tRNA ligase (422 aa).

An L-serine-binding site is contributed by 229–231 (TAE). Position 260–262 (260–262 (RKE)) interacts with ATP. Glutamate 283 provides a ligand contact to L-serine. An ATP-binding site is contributed by 347-350 (EISS). Serine 383 contributes to the L-serine binding site.

Belongs to the class-II aminoacyl-tRNA synthetase family. Type-1 seryl-tRNA synthetase subfamily. As to quaternary structure, homodimer. The tRNA molecule binds across the dimer.

Its subcellular location is the cytoplasm. It carries out the reaction tRNA(Ser) + L-serine + ATP = L-seryl-tRNA(Ser) + AMP + diphosphate + H(+). The enzyme catalyses tRNA(Sec) + L-serine + ATP = L-seryl-tRNA(Sec) + AMP + diphosphate + H(+). It functions in the pathway aminoacyl-tRNA biosynthesis; selenocysteinyl-tRNA(Sec) biosynthesis; L-seryl-tRNA(Sec) from L-serine and tRNA(Sec): step 1/1. Catalyzes the attachment of serine to tRNA(Ser). Is also able to aminoacylate tRNA(Sec) with serine, to form the misacylated tRNA L-seryl-tRNA(Sec), which will be further converted into selenocysteinyl-tRNA(Sec). This is Serine--tRNA ligase from Citrifermentans bemidjiense (strain ATCC BAA-1014 / DSM 16622 / JCM 12645 / Bem) (Geobacter bemidjiensis).